The following is a 292-amino-acid chain: ATP synthase gamma chain (292 aa).

The protein belongs to the ATPase gamma chain family. F-type ATPases have 2 components, CF(1) - the catalytic core - and CF(0) - the membrane proton channel. CF(1) has five subunits: alpha(3), beta(3), gamma(1), delta(1), epsilon(1). CF(0) has three main subunits: a, b and c.

The protein localises to the cell inner membrane. In terms of biological role, produces ATP from ADP in the presence of a proton gradient across the membrane. The gamma chain is believed to be important in regulating ATPase activity and the flow of protons through the CF(0) complex. This is ATP synthase gamma chain from Methylobacterium nodulans (strain LMG 21967 / CNCM I-2342 / ORS 2060).